The sequence spans 338 residues: Mugineic-acid 3-dioxygenase (338 aa).

One can recognise a Fe2OG dioxygenase domain in the interval D180–P283. Residues H208, D210, and H264 each coordinate Fe cation. R274 contacts 2-oxoglutarate.

The protein belongs to the iron/ascorbate-dependent oxidoreductase family. The cofactor is Fe(2+). L-ascorbate serves as cofactor. In terms of tissue distribution, expressed in roots, but not in leaves.

It catalyses the reaction mugineate + 2-oxoglutarate + O2 = 3-epihydroxymugineate + succinate + CO2 + H(+). The catalysed reaction is 2'-deoxymugineate + 2-oxoglutarate + O2 = 3-epihydroxy-2'-deoxymugineate + succinate + CO2 + H(+). Its function is as follows. Involved in the biosynthesis of mugineic acid family of phytosiderophores. Hydroxylates the C-3 positions of mugineic acid (MA) and 2'-deoxymugineic acid (DMA). May be involved in boron tolerance. This chain is Mugineic-acid 3-dioxygenase (IDS2), found in Hordeum vulgare (Barley).